We begin with the raw amino-acid sequence, 801 residues long: Protocadherin beta-8 (801 aa).

Residues 1–29 (MEASGKLICRQRQVLFSFLLLGLSLAGAA) form the signal peptide. The Extracellular segment spans residues 30–691 (EPRSYSVVEE…GQADSLTVYL (662 aa)). 5 consecutive Cadherin domains span residues 36–134 (VVEE…SPVF), 139–243 (MLVK…APEF), 248–348 (YRVQ…APEV), 353–452 (FTSP…APAF), and 457–562 (YTLF…SPFV). Cysteine 97 and cysteine 103 are joined by a disulfide. 2 N-linked (GlcNAc...) asparagine glycosylation sites follow: asparagine 419 and asparagine 437. Asparagine 568 carries an N-linked (GlcNAc...) asparagine glycan. Residues 569–672 (GSAPCTELVP…LVDGFSQPYL (104 aa)) enclose the Cadherin 6 domain. The helical transmembrane segment at 692–710 (VVALASVSSLFLFSVLLFV) threads the bilayer. The Cytoplasmic segment spans residues 711–801 (AVLLCRRSRA…NGFGFSLQLK (91 aa)).

As to quaternary structure, forms homodimers in trans (molecules expressed by two different cells). Forms promiscuous heterodimers in cis (at the plasma membrane of the same cell) with other protocadherins.

Its subcellular location is the cell membrane. Its function is as follows. Calcium-dependent cell-adhesion protein involved in cells self-recognition and non-self discrimination. Thereby, it is involved in the establishment and maintenance of specific neuronal connections in the brain. This is Protocadherin beta-8 from Homo sapiens (Human).